The chain runs to 200 residues: Putative peroxiredoxin sll0755 (200 aa).

Residues 5–163 (LRVGQPAPDF…TLRVLKAIRH (159 aa)) form the Thioredoxin domain. Catalysis depends on Cys-50, which acts as the Cysteine sulfenic acid (-SOH) intermediate.

Belongs to the peroxiredoxin family. AhpC/Prx1 subfamily. In terms of assembly, homodimer; disulfide-linked, upon oxidation.

The protein localises to the cytoplasm. It carries out the reaction a hydroperoxide + [thioredoxin]-dithiol = an alcohol + [thioredoxin]-disulfide + H2O. In terms of biological role, thiol-specific peroxidase that catalyzes the reduction of hydrogen peroxide and organic hydroperoxides to water and alcohols, respectively. Plays a role in cell protection against oxidative stress by detoxifying peroxides. The protein is Putative peroxiredoxin sll0755 of Synechocystis sp. (strain ATCC 27184 / PCC 6803 / Kazusa).